We begin with the raw amino-acid sequence, 370 residues long: DNA replication and repair protein RecF (370 aa).

30 to 37 contacts ATP; that stretch reads GPNGSGKT.

The protein belongs to the RecF family.

It is found in the cytoplasm. In terms of biological role, the RecF protein is involved in DNA metabolism; it is required for DNA replication and normal SOS inducibility. RecF binds preferentially to single-stranded, linear DNA. It also seems to bind ATP. This chain is DNA replication and repair protein RecF, found in Prosthecochloris aestuarii (strain DSM 271 / SK 413).